Consider the following 206-residue polypeptide: Guanylate kinase (206 aa).

The Guanylate kinase-like domain maps to 6–184; that stretch reads GTLYIISAPS…ALGDLKAIFR (179 aa). 13-20 is an ATP binding site; it reads APSGAGKS.

The protein belongs to the guanylate kinase family.

It is found in the cytoplasm. The enzyme catalyses GMP + ATP = GDP + ADP. Functionally, essential for recycling GMP and indirectly, cGMP. The protein is Guanylate kinase of Pseudomonas fluorescens (strain ATCC BAA-477 / NRRL B-23932 / Pf-5).